Reading from the N-terminus, the 153-residue chain is Acylphosphatase-like protein MJ0553 (153 aa).

Residues 4–102 (TYELIIYGRV…SRLSSDDILE (99 aa)) form the Acylphosphatase-like domain.

This is Acylphosphatase-like protein MJ0553 from Methanocaldococcus jannaschii (strain ATCC 43067 / DSM 2661 / JAL-1 / JCM 10045 / NBRC 100440) (Methanococcus jannaschii).